Reading from the N-terminus, the 416-residue chain is Squalene synthase (416 aa).

Transmembrane regions (helical) follow at residues 285–304 and 386–406; these read VINF…NACY and FISY…FLIA.

It belongs to the phytoene/squalene synthase family. Mg(2+) serves as cofactor.

It is found in the endoplasmic reticulum membrane. The enzyme catalyses 2 (2E,6E)-farnesyl diphosphate + NADPH + H(+) = squalene + 2 diphosphate + NADP(+). The catalysed reaction is 2 (2E,6E)-farnesyl diphosphate + NADH + H(+) = squalene + 2 diphosphate + NAD(+). Its pathway is terpene metabolism; lanosterol biosynthesis; lanosterol from farnesyl diphosphate: step 1/3. The polypeptide is Squalene synthase (fdfT) (Dictyostelium discoideum (Social amoeba)).